Reading from the N-terminus, the 187-residue chain is Elongation factor P (187 aa).

It belongs to the elongation factor P family.

The protein localises to the cytoplasm. It participates in protein biosynthesis; polypeptide chain elongation. Functionally, involved in peptide bond synthesis. Stimulates efficient translation and peptide-bond synthesis on native or reconstituted 70S ribosomes in vitro. Probably functions indirectly by altering the affinity of the ribosome for aminoacyl-tRNA, thus increasing their reactivity as acceptors for peptidyl transferase. The sequence is that of Elongation factor P from Tolumonas auensis (strain DSM 9187 / NBRC 110442 / TA 4).